Reading from the N-terminus, the 311-residue chain is Bifunctional protein FolD (311 aa).

Residues 180–182, Ser209, and Ile250 each bind NADP(+); that span reads GRS.

This sequence belongs to the tetrahydrofolate dehydrogenase/cyclohydrolase family. As to quaternary structure, homodimer.

The catalysed reaction is (6R)-5,10-methylene-5,6,7,8-tetrahydrofolate + NADP(+) = (6R)-5,10-methenyltetrahydrofolate + NADPH. The enzyme catalyses (6R)-5,10-methenyltetrahydrofolate + H2O = (6R)-10-formyltetrahydrofolate + H(+). The protein operates within one-carbon metabolism; tetrahydrofolate interconversion. In terms of biological role, catalyzes the oxidation of 5,10-methylenetetrahydrofolate to 5,10-methenyltetrahydrofolate and then the hydrolysis of 5,10-methenyltetrahydrofolate to 10-formyltetrahydrofolate. This is Bifunctional protein FolD from Haloquadratum walsbyi (strain DSM 16790 / HBSQ001).